A 269-amino-acid polypeptide reads, in one-letter code: 3-deoxy-manno-octulosonate cytidylyltransferase (269 aa).

The protein belongs to the KdsB family.

It is found in the cytoplasm. The enzyme catalyses 3-deoxy-alpha-D-manno-oct-2-ulosonate + CTP = CMP-3-deoxy-beta-D-manno-octulosonate + diphosphate. It functions in the pathway nucleotide-sugar biosynthesis; CMP-3-deoxy-D-manno-octulosonate biosynthesis; CMP-3-deoxy-D-manno-octulosonate from 3-deoxy-D-manno-octulosonate and CTP: step 1/1. The protein operates within bacterial outer membrane biogenesis; lipopolysaccharide biosynthesis. Its function is as follows. Activates KDO (a required 8-carbon sugar) for incorporation into bacterial lipopolysaccharide in Gram-negative bacteria. The protein is 3-deoxy-manno-octulosonate cytidylyltransferase of Cupriavidus pinatubonensis (strain JMP 134 / LMG 1197) (Cupriavidus necator (strain JMP 134)).